The sequence spans 237 residues: RNA-binding protein 38 (237 aa).

Residues 1–24 are disordered; it reads MLLQPACSPSVFPRPSAAPSAMHG. The RRM domain maps to 32–109; the sequence is TKIFVGGLPY…RKANVNLAYL (78 aa).

The protein belongs to the RBM38 family. In terms of tissue distribution, expressed in cardiac and skeletal muscle tissues.

The protein resides in the cytoplasm. The protein localises to the cytosol. Its subcellular location is the nucleus. Functionally, RNA-binding protein that specifically bind the 3'-UTR of CDKN1A transcripts, leading to maintain the stability of CDKN1A transcripts, thereby acting as a mediator of the p53/TP53 family to regulate CDKN1A. CDKN1A is a cyclin-dependent kinase inhibitor transcriptionally regulated by the p53/TP53 family to induce cell cycle arrest. Has the ability to induce cell cycle arrest in G1 and maintain the stability of CDKN1A transcripts induced by p53/TP53. Also acts as a mRNA splicing factor. Specifically regulates the expression of FGFR2-IIIb, an epithelial cell-specific isoform of FGFR2. Plays a role in myogenic differentiation. The polypeptide is RNA-binding protein 38 (Rbm38) (Mus musculus (Mouse)).